The primary structure comprises 185 residues: Probable chorismate pyruvate-lyase 1 (185 aa).

R70, L108, and E166 together coordinate substrate.

The protein belongs to the UbiC family.

It localises to the cytoplasm. The catalysed reaction is chorismate = 4-hydroxybenzoate + pyruvate. It functions in the pathway cofactor biosynthesis; ubiquinone biosynthesis. In terms of biological role, removes the pyruvyl group from chorismate, with concomitant aromatization of the ring, to provide 4-hydroxybenzoate (4HB) for the ubiquinone pathway. This chain is Probable chorismate pyruvate-lyase 1, found in Pseudomonas fluorescens (strain Pf0-1).